The following is a 386-amino-acid chain: ATP synthase subunit a (386 aa).

A run of 4 helical transmembrane segments spans residues 150 to 170 (FTNE…LFFV), 243 to 263 (HFLI…IVGF), 270 to 290 (FFSF…LVLL), and 310 to 330 (MMAG…MLFL).

Belongs to the ATPase A chain family. In terms of assembly, F-type ATPases have 2 components, CF(1) - the catalytic core - and CF(0) - the membrane proton channel. CF(1) has five subunits: alpha(3), beta(3), gamma(1), delta(1), epsilon(1). CF(0) has three main subunits: a, b and c.

It localises to the mitochondrion inner membrane. In terms of biological role, mitochondrial membrane ATP synthase (F(1)F(0) ATP synthase or Complex V) produces ATP from ADP in the presence of a proton gradient across the membrane which is generated by electron transport complexes of the respiratory chain. F-type ATPases consist of two structural domains, F(1) - containing the extramembraneous catalytic core and F(0) - containing the membrane proton channel, linked together by a central stalk and a peripheral stalk. During catalysis, ATP synthesis in the catalytic domain of F(1) is coupled via a rotary mechanism of the central stalk subunits to proton translocation. Key component of the proton channel; it may play a direct role in the translocation of protons across the membrane. In Triticum aestivum (Wheat), this protein is ATP synthase subunit a (ATP6).